A 1051-amino-acid chain; its full sequence is Integrin alpha-3 (1051 aa).

A signal peptide spans 1–32 (MGPGPRCAPGDPGWMLGALALMVAASGRFAFA). Over 33–991 (FNLDTRFLVV…LVEELPAEIE (959 aa)) the chain is Extracellular. 7 FG-GAP repeats span residues 38 to 103 (RFLV…KDDC), 110 to 171 (EKSD…DLQL), 185 to 235 (CNSN…WDLS), 236 to 292 (EYSY…GGDL), 293 to 354 (KRKQ…TSFP), 356 to 411 (QPSL…GLLR), and 415 to 477 (QIVH…VARP). N86 carries an N-linked (GlcNAc...) asparagine glycan. Cystine bridges form between C94–C103, C140–C162, and C185–C197. D315, N317, D319, D323, D378, N380, D382, D386, D439, D441, N443, Y445, and D447 together coordinate Ca(2+). 2 cysteine pairs are disulfide-bonded: C485–C490 and C496–C550. N-linked (GlcNAc...) asparagine glycosylation is found at N500, N511, N573, and N605. Cysteines 615 and 621 form a disulfide. Residues N656, N697, and N841 are each glycosylated (N-linked (GlcNAc...) asparagine). A disulfide bond links C694 and C702. Intrachain disulfides connect C846-C904 and C911-C916. Positions 860 to 888 (LSDPGDKPHSPQRRRRQLDPGGDQGSPPV) are disordered. N-linked (GlcNAc...) asparagine glycosylation is found at N923, N926, N935, and N969. Residues 992–1019 (LWLVLVAVSAGLLLLGLIIILLWKCGFF) form a helical membrane-spanning segment. The GFFKR motif signature appears at 1017 to 1021 (GFFKR). At 1020 to 1051 (KRARTRALYEAKRQKAEMKSQPSETERLTDDY) the chain is on the cytoplasmic side.

This sequence belongs to the integrin alpha chain family. As to quaternary structure, heterodimer of an alpha and a beta subunit. The alpha subunit is composed of a heavy and a light chain linked by a disulfide bond. Alpha-3 associates with beta-1. Interacts with HPS5. Interacts with FAP (seprase); the interaction occurs at the cell surface of invadopodia membrane in a collagen-dependent manner. In terms of processing, isoform 1, but not isoform 2, is phosphorylated on serine residues.

It localises to the cell membrane. The protein localises to the cell projection. Its subcellular location is the invadopodium membrane. The protein resides in the filopodium membrane. In terms of biological role, integrin alpha-3/beta-1 is a receptor for fibronectin, laminin, collagen, epiligrin, thrombospondin and CSPG4. Integrin alpha-3/beta-1 provides a docking site for FAP (seprase) at invadopodia plasma membranes in a collagen-dependent manner and hence may participate in the adhesion, formation of invadopodia and matrix degradation processes, promoting cell invasion. Alpha-3/beta-1 may mediate with LGALS3 the stimulation by CSPG4 of endothelial cells migration. This chain is Integrin alpha-3 (ITGA3), found in Cricetulus griseus (Chinese hamster).